The following is a 418-amino-acid chain: Queuine tRNA-ribosyltransferase accessory subunit 2 (418 aa).

Positions 325, 327, 330, and 356 each coordinate Zn(2+).

It belongs to the queuine tRNA-ribosyltransferase family. QTRT2 subfamily. In terms of assembly, heterodimer of a catalytic subunit and an accessory subunit. Requires Zn(2+) as cofactor.

It is found in the cytoplasm. Its function is as follows. Non-catalytic subunit of the queuine tRNA-ribosyltransferase (TGT) that catalyzes the base-exchange of a guanine (G) residue with queuine (Q) at position 34 (anticodon wobble position) in tRNAs with GU(N) anticodons (tRNA-Asp, -Asn, -His and -Tyr), resulting in the hypermodified nucleoside queuosine (7-(((4,5-cis-dihydroxy-2-cyclopenten-1-yl)amino)methyl)-7-deazaguanosine). The polypeptide is Queuine tRNA-ribosyltransferase accessory subunit 2 (Drosophila melanogaster (Fruit fly)).